The chain runs to 342 residues: tRNA-specific 2-thiouridylase MnmA (342 aa).

Residues Leu-6–Ser-13 and Leu-32 each bind ATP. The Nucleophile role is filled by Cys-92. An intrachain disulfide couples Cys-92 to Cys-191. Residue Gly-116 coordinates ATP. The tract at residues Lys-138–Gln-140 is interaction with tRNA. Cys-191 (cysteine persulfide intermediate) is an active-site residue. Positions Arg-293–Tyr-294 are interaction with tRNA.

This sequence belongs to the MnmA/TRMU family.

It localises to the cytoplasm. The catalysed reaction is S-sulfanyl-L-cysteinyl-[protein] + uridine(34) in tRNA + AH2 + ATP = 2-thiouridine(34) in tRNA + L-cysteinyl-[protein] + A + AMP + diphosphate + H(+). Functionally, catalyzes the 2-thiolation of uridine at the wobble position (U34) of tRNA, leading to the formation of s(2)U34. In Helicobacter pylori (strain HPAG1), this protein is tRNA-specific 2-thiouridylase MnmA.